Consider the following 237-residue polypeptide: 2-C-methyl-D-erythritol 4-phosphate cytidylyltransferase (237 aa).

Belongs to the IspD/TarI cytidylyltransferase family. IspD subfamily.

It carries out the reaction 2-C-methyl-D-erythritol 4-phosphate + CTP + H(+) = 4-CDP-2-C-methyl-D-erythritol + diphosphate. It functions in the pathway isoprenoid biosynthesis; isopentenyl diphosphate biosynthesis via DXP pathway; isopentenyl diphosphate from 1-deoxy-D-xylulose 5-phosphate: step 2/6. Catalyzes the formation of 4-diphosphocytidyl-2-C-methyl-D-erythritol from CTP and 2-C-methyl-D-erythritol 4-phosphate (MEP). This Acaryochloris marina (strain MBIC 11017) protein is 2-C-methyl-D-erythritol 4-phosphate cytidylyltransferase.